Reading from the N-terminus, the 513-residue chain is ATP synthase subunit alpha (513 aa).

169 to 176 (GDRQTGKT) serves as a coordination point for ATP.

The protein belongs to the ATPase alpha/beta chains family. As to quaternary structure, F-type ATPases have 2 components, CF(1) - the catalytic core - and CF(0) - the membrane proton channel. CF(1) has five subunits: alpha(3), beta(3), gamma(1), delta(1), epsilon(1). CF(0) has three main subunits: a(1), b(2) and c(9-12). The alpha and beta chains form an alternating ring which encloses part of the gamma chain. CF(1) is attached to CF(0) by a central stalk formed by the gamma and epsilon chains, while a peripheral stalk is formed by the delta and b chains.

It localises to the cell inner membrane. It carries out the reaction ATP + H2O + 4 H(+)(in) = ADP + phosphate + 5 H(+)(out). Its function is as follows. Produces ATP from ADP in the presence of a proton gradient across the membrane. The alpha chain is a regulatory subunit. This is ATP synthase subunit alpha from Haemophilus influenzae (strain PittGG).